A 170-amino-acid polypeptide reads, in one-letter code: Ureidoglycolate lyase (170 aa).

It belongs to the ureidoglycolate lyase family. As to quaternary structure, homodimer. Requires Ni(2+) as cofactor.

The catalysed reaction is (S)-ureidoglycolate = urea + glyoxylate. Its pathway is nitrogen metabolism; (S)-allantoin degradation. Its function is as follows. Catalyzes the catabolism of the allantoin degradation intermediate (S)-ureidoglycolate, generating urea and glyoxylate. Involved in the utilization of allantoin as nitrogen source. This chain is Ureidoglycolate lyase, found in Pseudomonas savastanoi pv. phaseolicola (strain 1448A / Race 6) (Pseudomonas syringae pv. phaseolicola (strain 1448A / Race 6)).